The chain runs to 270 residues: Lipopolysaccharide core biosynthesis glycosyltransferase LpsC (270 aa).

It belongs to the glycosyltransferase 2 family. WaaE/KdtX subfamily.

The protein operates within bacterial outer membrane biogenesis; LPS core biosynthesis. The protein is Lipopolysaccharide core biosynthesis glycosyltransferase LpsC (lpsC) of Rhizobium meliloti (strain 1021) (Ensifer meliloti).